The chain runs to 171 residues: Prolyl-tRNA synthetase associated domain-containing protein 1 (171 aa).

The protein belongs to the PRORSD1 family.

This Bos taurus (Bovine) protein is Prolyl-tRNA synthetase associated domain-containing protein 1 (PRORSD1).